Consider the following 401-residue polypeptide: Argininosuccinate synthase (401 aa).

9–17 (AYSGGLDTS) lines the ATP pocket. Tyr86 contributes to the L-citrulline binding site. An ATP-binding site is contributed by Gly116. Thr118, Asn122, and Asp123 together coordinate L-aspartate. Position 122 (Asn122) interacts with L-citrulline. The L-citrulline site is built by Arg126, Ser174, Ser183, Glu259, and Tyr271.

The protein belongs to the argininosuccinate synthase family. Type 1 subfamily. In terms of assembly, homotetramer.

The protein localises to the cytoplasm. The catalysed reaction is L-citrulline + L-aspartate + ATP = 2-(N(omega)-L-arginino)succinate + AMP + diphosphate + H(+). It functions in the pathway amino-acid biosynthesis; L-arginine biosynthesis; L-arginine from L-ornithine and carbamoyl phosphate: step 2/3. In Bacillus cereus (strain AH187), this protein is Argininosuccinate synthase.